Reading from the N-terminus, the 206-residue chain is Holliday junction branch migration complex subunit RuvA (206 aa).

Residues 1–63 are domain I; that stretch reads MISSLRGDVI…DDAHTLYAFS (63 aa). Positions 64–142 are domain II; sequence TSEQRETFGI…ALEATSGQAT (79 aa). Residues 143–150 form a flexible linker region; sequence IGDIAATG. Positions 151 to 206 are domain III; sequence NDTALQSQVVEALVGLGFTEAKAATAVKKILEEQNGTTDPSSVLREALQRLSGQKR.

Belongs to the RuvA family. As to quaternary structure, homotetramer. Forms an RuvA(8)-RuvB(12)-Holliday junction (HJ) complex. HJ DNA is sandwiched between 2 RuvA tetramers; dsDNA enters through RuvA and exits via RuvB. An RuvB hexamer assembles on each DNA strand where it exits the tetramer. Each RuvB hexamer is contacted by two RuvA subunits (via domain III) on 2 adjacent RuvB subunits; this complex drives branch migration. In the full resolvosome a probable DNA-RuvA(4)-RuvB(12)-RuvC(2) complex forms which resolves the HJ.

Its subcellular location is the cytoplasm. Functionally, the RuvA-RuvB-RuvC complex processes Holliday junction (HJ) DNA during genetic recombination and DNA repair, while the RuvA-RuvB complex plays an important role in the rescue of blocked DNA replication forks via replication fork reversal (RFR). RuvA specifically binds to HJ cruciform DNA, conferring on it an open structure. The RuvB hexamer acts as an ATP-dependent pump, pulling dsDNA into and through the RuvAB complex. HJ branch migration allows RuvC to scan DNA until it finds its consensus sequence, where it cleaves and resolves the cruciform DNA. The protein is Holliday junction branch migration complex subunit RuvA of Corynebacterium urealyticum (strain ATCC 43042 / DSM 7109).